The sequence spans 354 residues: Tetraacyldisaccharide 4'-kinase (354 aa).

53–60 is a binding site for ATP; sequence AWGGTGKT.

The protein belongs to the LpxK family.

It carries out the reaction a lipid A disaccharide + ATP = a lipid IVA + ADP + H(+). The protein operates within glycolipid biosynthesis; lipid IV(A) biosynthesis; lipid IV(A) from (3R)-3-hydroxytetradecanoyl-[acyl-carrier-protein] and UDP-N-acetyl-alpha-D-glucosamine: step 6/6. In terms of biological role, transfers the gamma-phosphate of ATP to the 4'-position of a tetraacyldisaccharide 1-phosphate intermediate (termed DS-1-P) to form tetraacyldisaccharide 1,4'-bis-phosphate (lipid IVA). In Nitratidesulfovibrio vulgaris (strain ATCC 29579 / DSM 644 / CCUG 34227 / NCIMB 8303 / VKM B-1760 / Hildenborough) (Desulfovibrio vulgaris), this protein is Tetraacyldisaccharide 4'-kinase.